The primary structure comprises 432 residues: Sonic hedgehog protein (432 aa).

An N-terminal signal peptide occupies residues 1-26 (MDEMILLRRVLLAGFICALLVPSGLS). A lipid anchor (N-palmitoyl cysteine) is attached at C27. Residues 35 to 41 (TRKRFKK) carry the Cardin-Weintraub motif. The Ca(2+) site is built by E92, E93, D98, T128, E129, D132, and D134. Zn(2+)-binding residues include H143, D150, and H185. The Cholesterol glycine ester moiety is linked to residue G200.

Belongs to the hedgehog family. As to quaternary structure, interacts with HHATL/GUP1 which negatively regulates HHAT-mediated palmitoylation of the SHH N-terminus. Interacts with BOC and CDON. Interacts with HHIP. Interacts with DISP1 via its cholesterol anchor. Interacts with SCUBE2. Multimer. Post-translationally, the C-terminal domain displays an autoproteolysis activity and a cholesterol transferase activity. Both activities result in the cleavage of the full-length protein and covalent attachment of a cholesterol moiety to the C-terminal of the newly generated N-terminal fragment (ShhN). Cholesterylation is required for the sonic hedgehog protein N-product targeting to lipid rafts and multimerization. ShhN is the active species in both local and long-range signaling, whereas the C-product (ShhC) is degraded in the reticulum endoplasmic. In terms of processing, N-palmitoylation by HHAT of ShhN is required for sonic hedgehog protein N-product multimerization and full activity. It is a prerequisite for the membrane-proximal positioning and the subsequent shedding of this N-terminal peptide. The lipidated N- and C-terminal peptides of ShhNp can be cleaved (shedding). The N-terminal palmitoylated peptide is cleaved at the Cardin-Weintraub (CW) motif site. The cleavage reduced the interactions with heparan sulfate. The cleavage is enhanced by SCUBE2.

It localises to the endoplasmic reticulum membrane. It is found in the golgi apparatus membrane. The protein localises to the cell membrane. The enzyme catalyses glycyl-L-cysteinyl-[protein] + cholesterol + H(+) = [protein]-C-terminal glycyl cholesterol ester + N-terminal L-cysteinyl-[protein]. The C-terminal part of the sonic hedgehog protein precursor displays an autoproteolysis and a cholesterol transferase activity. Both activities result in the cleavage of the full-length protein into two parts (ShhN and ShhC) followed by the covalent attachment of a cholesterol moiety to the C-terminal of the newly generated ShhN. Both activities occur in the endoplasmic reticulum. Once cleaved, ShhC is degraded in the endoplasmic reticulum. Its function is as follows. The dually lipidated sonic hedgehog protein N-product (ShhNp) is a morphogen which is essential for a variety of patterning events during development. Induces ventral cell fate in the neural tube and somites. Involved in the patterning of the anterior-posterior axis of the developing limb bud. Essential for axon guidance. Binds to the patched (PTCH1) receptor, which functions in association with smoothened (SMO), to activate the transcription of target genes. In the absence of SHH, PTCH1 represses the constitutive signaling activity of SMO. This is Sonic hedgehog protein from Cynops pyrrhogaster (Japanese fire-bellied newt).